A 483-amino-acid polypeptide reads, in one-letter code: Glutamyl-tRNA(Gln) amidotransferase subunit A (483 aa).

Active-site charge relay system residues include Lys76 and Ser151. Ser175 functions as the Acyl-ester intermediate in the catalytic mechanism.

It belongs to the amidase family. GatA subfamily. Heterotrimer of A, B and C subunits.

The enzyme catalyses L-glutamyl-tRNA(Gln) + L-glutamine + ATP + H2O = L-glutaminyl-tRNA(Gln) + L-glutamate + ADP + phosphate + H(+). Functionally, allows the formation of correctly charged Gln-tRNA(Gln) through the transamidation of misacylated Glu-tRNA(Gln) in organisms which lack glutaminyl-tRNA synthetase. The reaction takes place in the presence of glutamine and ATP through an activated gamma-phospho-Glu-tRNA(Gln). The protein is Glutamyl-tRNA(Gln) amidotransferase subunit A of Pseudomonas savastanoi pv. phaseolicola (strain 1448A / Race 6) (Pseudomonas syringae pv. phaseolicola (strain 1448A / Race 6)).